Here is a 1843-residue protein sequence, read N- to C-terminus: Zinc finger protein 142 (1843 aa).

C2H2-type zinc fingers lie at residues 103 to 127 and 164 to 186; these read YFCERCEQSFAEPTLLSVHQCTETH and LPCPVCRQEFVQPQALKSHFKIH. A disordered region spans residues 294-357; it reads PAAKLPPGHR…LEGHVGSGTE (64 aa). A compositionally biased stretch (acidic residues) spans 318–329; that stretch reads SAEEEDAEEEES. Positions 330 to 340 are enriched in basic and acidic residues; it reads VTQKDSQKVMD. Position 354 is a phosphoserine (Ser354). The C2H2-type 3 zinc finger occupies 363-385; it reads HMCPECKRCFKKRTHLVEHLHLH. A C2H2-type 4; degenerate zinc finger spans residues 391–413; it reads LQCPNCQKFFTSKSKLKTHLLRE. 7 consecutive C2H2-type zinc fingers follow at residues 453 to 475, 543 to 566, 601 to 623, 629 to 651, 657 to 679, 685 to 707, and 744 to 767; these read YACPVCREEFRLSQALKEHLKSH, FHCPHCDFACSNKHLFRKHKKQGH, HQCSECNFATAHKRVLIRHMLLH, HKCELCDFTCRDVSYLSKHMLTH, YMCTECGYVTKWKHYLSVHMRKH, YQCNQCSYRCHRADQLSSHKLRH, and YPCRYCSYQSRHKQALLSHENCKH. Residue Lys794 forms a Glycyl lysine isopeptide (Lys-Gly) (interchain with G-Cter in SUMO2) linkage. Disordered stretches follow at residues 819–888 and 1103–1177; these read QCLA…LGEV and PKPV…TGTS. The span at 837–846 shows a compositional bias: basic and acidic residues; sequence PEREDREHEI. Residues 1157–1167 show a composition bias toward pro residues; that stretch reads LPTPSDFPTSP. The span at 1168–1177 shows a compositional bias: polar residues; it reads PENSLPTGTS. C2H2-type zinc fingers lie at residues 1331-1354, 1388-1411, 1446-1469, 1514-1537, 1608-1630, 1636-1658, 1664-1686, 1692-1715, and 1721-1743; these read LQCGDCGFTCKQSRCLQQHRRLKH, IPCSSCPQTFGTNSKLRLHQLRVH, FSCTQCEAQFSSETALKQHALRRH, LECGACQESFPNRPALDEHRRQHH, YKCTDCAYSTKNRQKITWHSRIH, YHCHLCAYACADPSRLKYHMRIH, YLCPECGYKCKWVNQLKYHMTKH, YQCPECEYCTNRADALRVHRETRH, and FMCEQCGKAFKTRFLLRTHLRKH. Residues Lys1353 and Lys1402 each participate in a glycyl lysine isopeptide (Lys-Gly) (interchain with G-Cter in SUMO2) cross-link. Lys1747 participates in a covalent cross-link: Glycyl lysine isopeptide (Lys-Gly) (interchain with G-Cter in SUMO2). The C2H2-type 21 zinc-finger motif lies at 1749 to 1771; that stretch reads YVCNVCHRAFRWAAGLRHHALTH. The tract at residues 1795–1843 is disordered; it reads HVRRHHPDQADPNQGVGKDPTTPTVHLHDVKLEDPSPPAPPAPSTGPEG. A compositionally biased stretch (pro residues) spans 1829-1843; the sequence is PSPPAPPAPSTGPEG.

It belongs to the krueppel C2H2-type zinc-finger protein family.

It localises to the nucleus. May be involved in transcriptional regulation. This chain is Zinc finger protein 142, found in Mus musculus (Mouse).